The primary structure comprises 156 residues: Transcription inhibitor protein Gfh1 (156 aa).

Residues 1–74 (MAREVKLTKA…LEDILSRAVI (74 aa)) adopt a coiled-coil conformation.

It belongs to the GreA/GreB family. Interacts with RNAP.

Functionally, inhibits all catalytic activities of RNA polymerase (RNAP) by partially occluding its substrate-binding site and preventing NTP binding. The chain is Transcription inhibitor protein Gfh1 (gfh1) from Thermus thermophilus (strain ATCC BAA-163 / DSM 7039 / HB27).